Here is a 188-residue protein sequence, read N- to C-terminus: ATP synthase subunit b 1 (188 aa).

Residues 7-27 (LSVLALAMLAANPAFAAGGGI) traverse the membrane as a helical segment.

It belongs to the ATPase B chain family. As to quaternary structure, F-type ATPases have 2 components, F(1) - the catalytic core - and F(0) - the membrane proton channel. F(1) has five subunits: alpha(3), beta(3), gamma(1), delta(1), epsilon(1). F(0) has three main subunits: a(1), b(2) and c(10-14). The alpha and beta chains form an alternating ring which encloses part of the gamma chain. F(1) is attached to F(0) by a central stalk formed by the gamma and epsilon chains, while a peripheral stalk is formed by the delta and b chains.

The protein localises to the cell inner membrane. In terms of biological role, f(1)F(0) ATP synthase produces ATP from ADP in the presence of a proton or sodium gradient. F-type ATPases consist of two structural domains, F(1) containing the extramembraneous catalytic core and F(0) containing the membrane proton channel, linked together by a central stalk and a peripheral stalk. During catalysis, ATP synthesis in the catalytic domain of F(1) is coupled via a rotary mechanism of the central stalk subunits to proton translocation. Its function is as follows. Component of the F(0) channel, it forms part of the peripheral stalk, linking F(1) to F(0). In Roseobacter denitrificans (strain ATCC 33942 / OCh 114) (Erythrobacter sp. (strain OCh 114)), this protein is ATP synthase subunit b 1.